Reading from the N-terminus, the 195-residue chain is Guanylate kinase (195 aa).

Residues 10-189 (GRLIVFSAPS…TVDAVATRIA (180 aa)) enclose the Guanylate kinase-like domain. 17–24 (APSGTGKS) provides a ligand contact to ATP.

It belongs to the guanylate kinase family.

It localises to the cytoplasm. It carries out the reaction GMP + ATP = GDP + ADP. Functionally, essential for recycling GMP and indirectly, cGMP. The protein is Guanylate kinase of Chlorobaculum tepidum (strain ATCC 49652 / DSM 12025 / NBRC 103806 / TLS) (Chlorobium tepidum).